A 232-amino-acid chain; its full sequence is 5'-methylthioadenosine/S-adenosylhomocysteine nucleosidase (232 aa).

Residue glutamate 14 is the Proton acceptor of the active site. Substrate contacts are provided by residues glycine 80, valine 154, and 175 to 176; that span reads ME. Aspartate 199 acts as the Proton donor in catalysis.

Belongs to the PNP/UDP phosphorylase family. MtnN subfamily.

The enzyme catalyses S-adenosyl-L-homocysteine + H2O = S-(5-deoxy-D-ribos-5-yl)-L-homocysteine + adenine. The catalysed reaction is S-methyl-5'-thioadenosine + H2O = 5-(methylsulfanyl)-D-ribose + adenine. It catalyses the reaction 5'-deoxyadenosine + H2O = 5-deoxy-D-ribose + adenine. Its pathway is amino-acid biosynthesis; L-methionine biosynthesis via salvage pathway; S-methyl-5-thio-alpha-D-ribose 1-phosphate from S-methyl-5'-thioadenosine (hydrolase route): step 1/2. Functionally, catalyzes the irreversible cleavage of the glycosidic bond in both 5'-methylthioadenosine (MTA) and S-adenosylhomocysteine (SAH/AdoHcy) to adenine and the corresponding thioribose, 5'-methylthioribose and S-ribosylhomocysteine, respectively. Also cleaves 5'-deoxyadenosine, a toxic by-product of radical S-adenosylmethionine (SAM) enzymes, into 5-deoxyribose and adenine. The chain is 5'-methylthioadenosine/S-adenosylhomocysteine nucleosidase from Actinobacillus pleuropneumoniae serotype 3 (strain JL03).